Reading from the N-terminus, the 88-residue chain is UPF0298 protein BC_3932 (88 aa).

This sequence belongs to the UPF0298 family.

Its subcellular location is the cytoplasm. This is UPF0298 protein BC_3932 from Bacillus cereus (strain ATCC 14579 / DSM 31 / CCUG 7414 / JCM 2152 / NBRC 15305 / NCIMB 9373 / NCTC 2599 / NRRL B-3711).